A 637-amino-acid chain; its full sequence is Chaperone protein DnaK (637 aa).

T198 is subject to Phosphothreonine; by autocatalysis. A disordered region spans residues 597–637 (MYQQQAEGDAARDAAQDAAKDDVVDAEFTEVDDDKNDKKSA). Basic and acidic residues predominate over residues 605 to 619 (DAARDAAQDAAKDDV). A compositionally biased stretch (acidic residues) spans 620–630 (VDAEFTEVDDD).

It belongs to the heat shock protein 70 family.

Acts as a chaperone. This Afipia carboxidovorans (strain ATCC 49405 / DSM 1227 / KCTC 32145 / OM5) (Oligotropha carboxidovorans) protein is Chaperone protein DnaK.